An 81-amino-acid polypeptide reads, in one-letter code: Sulfur carrier protein TusA (81 aa).

Cysteine 19 acts as the Cysteine persulfide intermediate in catalysis.

The protein belongs to the sulfur carrier protein TusA family. As to quaternary structure, interacts with IscS.

The protein localises to the cytoplasm. The protein operates within tRNA modification. Its function is as follows. Sulfur carrier protein involved in sulfur trafficking in the cell. Part of a sulfur-relay system required for 2-thiolation during synthesis of 2-thiouridine of the modified wobble base 5-methylaminomethyl-2-thiouridine (mnm(5)s(2)U) in tRNA. Interacts with IscS and stimulates its cysteine desulfurase activity. Accepts an activated sulfur from IscS, which is then transferred to TusD, and thus determines the direction of sulfur flow from IscS to 2-thiouridine formation. Also appears to be involved in sulfur transfer for the biosynthesis of molybdopterin. This chain is Sulfur carrier protein TusA, found in Citrobacter koseri (strain ATCC BAA-895 / CDC 4225-83 / SGSC4696).